Consider the following 215-residue polypeptide: MSKVYDWFEERLEIQAIADDITSKYVPPHVNIFYCLGGITLTCFLVQVATGFAMTFYYRPTVTDAFASVQYIMTEANFGWLIRSVHRWSASMMVLMMILHVFRVYLTGGFKKPRELTWVTGVVLAVLTASFGVTGYSLPRDQIGYWAVKIVTGVPEAIPVIGSPLVELLRGSASVGQSTLTRFYSLHTFVLPLLTAVFMLMHFPMIRKQGISGPL.

The helical transmembrane segment at 32–52 (IFYCLGGITLTCFLVQVATGF) threads the bilayer. Cysteine 35 lines the heme c pocket. The heme b site is built by histidine 86 and histidine 100. 3 consecutive transmembrane segments (helical) span residues 90–110 (ASMMVLMMILHVFRVYLTGGF), 116–136 (LTWVTGVVLAVLTASFGVTGY), and 186–206 (LHTFVLPLLTAVFMLMHFPMI). Histidine 187 and histidine 202 together coordinate heme b.

Belongs to the cytochrome b family. PetB subfamily. As to quaternary structure, the 4 large subunits of the cytochrome b6-f complex are cytochrome b6, subunit IV (17 kDa polypeptide, PetD), cytochrome f and the Rieske protein, while the 4 small subunits are PetG, PetL, PetM and PetN. The complex functions as a dimer. Heme b serves as cofactor. It depends on heme c as a cofactor.

It is found in the plastid. The protein localises to the chloroplast thylakoid membrane. Component of the cytochrome b6-f complex, which mediates electron transfer between photosystem II (PSII) and photosystem I (PSI), cyclic electron flow around PSI, and state transitions. In Daucus carota (Wild carrot), this protein is Cytochrome b6.